The following is a 466-amino-acid chain: Cysteine--tRNA ligase (466 aa).

Cys29 serves as a coordination point for Zn(2+). Residues 31 to 41 (ATVQAPPHIGH) carry the 'HIGH' region motif. Positions 211, 236, and 240 each coordinate Zn(2+). The 'KMSKS' region signature appears at 267–271 (KMSKS). Residue Lys270 participates in ATP binding.

This sequence belongs to the class-I aminoacyl-tRNA synthetase family. As to quaternary structure, monomer. The cofactor is Zn(2+).

Its subcellular location is the cytoplasm. The catalysed reaction is tRNA(Cys) + L-cysteine + ATP = L-cysteinyl-tRNA(Cys) + AMP + diphosphate. This is Cysteine--tRNA ligase from Thermobifida fusca (strain YX).